The sequence spans 354 residues: Probable cinnamyl alcohol dehydrogenase 1 (354 aa).

Residue C47 coordinates Zn(2+). Residue S49 coordinates NADP(+). Residues H69, E70, C100, C103, C106, C114, and C163 each coordinate Zn(2+). NADP(+) contacts are provided by residues T167, 188–193, 211–216, T251, G275, and 296–298; these read GLGGVG, SSSDKK, and SFI.

Belongs to the zinc-containing alcohol dehydrogenase family. Homodimer. Requires Zn(2+) as cofactor.

The catalysed reaction is (E)-cinnamyl alcohol + NADP(+) = (E)-cinnamaldehyde + NADPH + H(+). It carries out the reaction (E)-coniferol + NADP(+) = (E)-coniferaldehyde + NADPH + H(+). The enzyme catalyses (E)-sinapyl alcohol + NADP(+) = (E)-sinapaldehyde + NADPH + H(+). It catalyses the reaction (E)-4-coumaroyl alcohol + NADP(+) = (E)-4-coumaraldehyde + NADPH + H(+). The catalysed reaction is (E)-caffeyl alcohol + NADP(+) = (E)-caffeyl aldehyde + NADPH + H(+). It participates in aromatic compound metabolism; phenylpropanoid biosynthesis. In terms of biological role, involved in lignin biosynthesis. Catalyzes the final step specific for the production of lignin monomers. Catalyzes the NADPH-dependent reduction of coniferaldehyde, 5-hydroxyconiferaldehyde, sinapaldehyde, 4-coumaraldehyde and caffeyl aldehyde to their respective alcohols. This chain is Probable cinnamyl alcohol dehydrogenase 1 (CAD1), found in Eucalyptus gunnii (Cider gum).